The chain runs to 617 residues: Diacylglycerol O-acyltransferase 1 (617 aa).

Disordered stretches follow at residues 1–52 (MEPI…ETER) and 95–186 (RNTN…PKQE). Over residues 7 to 17 (SNGNKNNSMDK) the composition is skewed to polar residues. Composition is skewed to low complexity over residues 18-34 (QPQQ…QQQQ) and 96-105 (NTNNNNQNNT). Polar residues predominate over residues 106 to 140 (SPTFSSANGKQSNLTQRKINTQIQSKQPTNNNVQP). The segment covering 160–177 (QNNNGNNNNNNNNNNNNN) has biased composition (low complexity). A run of 5 helical transmembrane segments spans residues 217–237 (LLLI…HLLY), 254–274 (WPGV…YLIE), 306–326 (IIAF…ICTF), 399–419 (IVEA…YMLP), and 449–469 (YVWL…VAEI). The short motif at 477–483 (FYRDWWN) is the FYXDWWN motif element. Transmembrane regions (helical) follow at residues 520-540 (GYFM…SIPF), 545-565 (LWGF…KNLM), and 570-590 (LGNV…VLLY). His-532 is a catalytic residue.

It belongs to the membrane-bound acyltransferase family. Sterol o-acyltransferase subfamily.

It localises to the endoplasmic reticulum membrane. It carries out the reaction an acyl-CoA + a 1,2-diacyl-sn-glycerol = a triacyl-sn-glycerol + CoA. The catalysed reaction is all-trans-retinol + an acyl-CoA = an all-trans-retinyl ester + CoA. It catalyses the reaction 2-(9Z-octadecenoyl)-glycerol + (9Z)-octadecenoyl-CoA = 1,2-di-(9Z-octadecenoyl)-sn-glycerol + CoA. The enzyme catalyses 1,2-di-(9Z-octadecenoyl)-sn-glycerol + (9Z)-octadecenoyl-CoA = 1,2,3-tri-(9Z-octadecenoyl)-glycerol + CoA. It carries out the reaction all-trans-retinol + hexadecanoyl-CoA = all-trans-retinyl hexadecanoate + CoA. The catalysed reaction is 1-O-(9Z-octadecenyl)-glycerol + (9Z)-octadecenoyl-CoA = 1-O-(9Z-octadecyl)-3-(9Z-octadecenoyl)-glycerol + CoA. It catalyses the reaction 1-O-(9Z-octadecyl)-3-(9Z-octadecenoyl)-glycerol + (9Z)-octadecenoyl-CoA = 1-O-(9Z-octadecenyl)-2,3-di-(9Z-octadecenoyl)glycerol + CoA. The enzyme catalyses 1-(9Z-octadecenoyl)-glycerol + (9Z)-octadecenoyl-CoA = 1,2-di-(9Z-octadecenoyl)-glycerol + CoA. It carries out the reaction 1,2-di-(9Z-octadecenoyl)-glycerol + (9Z)-octadecenoate + H(+) = 1,2,3-tri-(9Z-octadecenoyl)-glycerol + H2O. The catalysed reaction is 1-octadecanoyl-2-(5Z,8Z,11Z,14Z-eicosatetraenoyl)-sn-glycerol + (9Z)-octadecenoyl-CoA = 1-octadecanoyl-2-(5Z,8Z,11Z,14Z)-eicosatetraenoyl-3-(9Z)-octadecenoyl-sn-glycerol + CoA. It catalyses the reaction hexadecane-1,2-diol + 2 hexadecanoyl-CoA = 1,2-O,O-dihexadecanoyl-1,2-hexadecanediol + 2 CoA. The enzyme catalyses hexadecane-1,2-diol + hexadecanoyl-CoA = 2-hydroxyhexadecyl hexadecanoate + CoA. It carries out the reaction 2-(9Z-octadecenoyl)-glycerol + hexadecanoyl-CoA = 1-hexadecanoyl-2-(9Z-octadecenoyl)-sn-glycerol + CoA. The catalysed reaction is 1,2-di-(9Z-octadecenoyl)-sn-glycerol + hexadecanoyl-CoA = 1,2-di-(9Z)-octadecenoyl-3-hexadecanoyl-sn-glycerol + CoA. It catalyses the reaction hexadecan-1-ol + hexadecanoyl-CoA = hexadecanyl hexadecanoate + CoA. The enzyme catalyses 13-cis-retinol + hexadecanoyl-CoA = 13-cis-retinyl hexadecanoate + CoA. It carries out the reaction 1,3-di-(9Z-octadecenoyl)-glycerol + (9Z)-octadecenoyl-CoA = 1,2,3-tri-(9Z-octadecenoyl)-glycerol + CoA. The catalysed reaction is 2,3-di-(9Z)-octadecenoyl-sn-glycerol + (9Z)-octadecenoyl-CoA = 1,2,3-tri-(9Z-octadecenoyl)-glycerol + CoA. It functions in the pathway lipid metabolism; glycerolipid metabolism. In terms of biological role, catalyzes the terminal and only committed step in triacylglycerol synthesis by using diacylglycerol and fatty acyl CoA as substrates. The polypeptide is Diacylglycerol O-acyltransferase 1 (dgat1) (Dictyostelium discoideum (Social amoeba)).